A 287-amino-acid chain; its full sequence is ATP synthase gamma chain (287 aa).

Belongs to the ATPase gamma chain family. F-type ATPases have 2 components, CF(1) - the catalytic core - and CF(0) - the membrane proton channel. CF(1) has five subunits: alpha(3), beta(3), gamma(1), delta(1), epsilon(1). CF(0) has three main subunits: a, b and c.

The protein localises to the cell membrane. In terms of biological role, produces ATP from ADP in the presence of a proton gradient across the membrane. The gamma chain is believed to be important in regulating ATPase activity and the flow of protons through the CF(0) complex. This Staphylococcus carnosus (strain TM300) protein is ATP synthase gamma chain.